The sequence spans 118 residues: V-type proton ATPase subunit G 1 (118 aa).

At alanine 2 the chain carries N-acetylalanine.

The protein belongs to the V-ATPase G subunit family. In terms of assembly, V-ATPase is a heteromultimeric enzyme made up of two complexes: the ATP-hydrolytic V1 complex and the proton translocation V0 complex. The V1 complex consists of three catalytic AB heterodimers that form a heterohexamer, three peripheral stalks each consisting of EG heterodimers, one central rotor including subunits D and F, and the regulatory subunits C and H. The proton translocation complex V0 consists of the proton transport subunit a, a ring of proteolipid subunits c9c'', rotary subunit d, subunits e and f, and the accessory subunits ATP6AP1/Ac45 and ATP6AP2/PRR. In terms of tissue distribution, kidney; localizes to early distal nephron, encompassing thick ascending limbs and distal convoluted tubules (at protein level). Ubiquitous.

The protein resides in the apical cell membrane. Its function is as follows. Subunit of the V1 complex of vacuolar(H+)-ATPase (V-ATPase), a multisubunit enzyme composed of a peripheral complex (V1) that hydrolyzes ATP and a membrane integral complex (V0) that translocates protons. V-ATPase is responsible for acidifying and maintaining the pH of intracellular compartments and in some cell types, is targeted to the plasma membrane, where it is responsible for acidifying the extracellular environment. In aerobic conditions, involved in intracellular iron homeostasis, thus triggering the activity of Fe(2+) prolyl hydroxylase (PHD) enzymes, and leading to HIF1A hydroxylation and subsequent proteasomal degradation. This chain is V-type proton ATPase subunit G 1 (Atp6v1g1), found in Mus musculus (Mouse).